The primary structure comprises 737 residues: Catalase-peroxidase 2 (737 aa).

The interval 1 to 33 is disordered; it reads MPEATEHPPIGEAQTEPAQSGCPMVIKPPVEGG. The segment at residues 107–235 is a cross-link (tryptophyl-tyrosyl-methioninium (Trp-Tyr) (with M-261)); the sequence is WHAAGTYRVQ…LGASHMGLIY (129 aa). His108 acts as the Proton acceptor in catalysis. Residues 235–261 constitute a cross-link (tryptophyl-tyrosyl-methioninium (Tyr-Met) (with W-107)); it reads YVNPEGPEGNPDPIAAAIDIRETFGRM. His276 is a heme binding site.

This sequence belongs to the peroxidase family. Peroxidase/catalase subfamily. As to quaternary structure, homodimer or homotetramer. Requires heme b as cofactor. In terms of processing, formation of the three residue Trp-Tyr-Met cross-link is important for the catalase, but not the peroxidase activity of the enzyme.

It catalyses the reaction H2O2 + AH2 = A + 2 H2O. It carries out the reaction 2 H2O2 = O2 + 2 H2O. Its function is as follows. Bifunctional enzyme with both catalase and broad-spectrum peroxidase activity. The sequence is that of Catalase-peroxidase 2 from Mycolicibacterium vanbaalenii (strain DSM 7251 / JCM 13017 / BCRC 16820 / KCTC 9966 / NRRL B-24157 / PYR-1) (Mycobacterium vanbaalenii).